The chain runs to 25 residues: Aurein-5.1 (25 aa).

The protein belongs to the frog skin active peptide (FSAP) family. Aurein subfamily. Expressed by the skin dorsal glands.

It localises to the secreted. In terms of biological role, has no antimicrobial or anticancer activity. The sequence is that of Aurein-5.1 from Ranoidea aurea (Green and golden bell frog).